A 73-amino-acid polypeptide reads, in one-letter code: Small ribosomal subunit protein bS18c (73 aa).

Belongs to the bacterial ribosomal protein bS18 family. As to quaternary structure, part of the 30S ribosomal subunit.

It is found in the plastid. The protein resides in the chloroplast. This is Small ribosomal subunit protein bS18c (rps18) from Guillardia theta (Cryptophyte).